A 76-amino-acid polypeptide reads, in one-letter code: U10-ctenitoxin-Pn1a (76 aa).

An N-terminal signal peptide occupies residues 1-15 (SFVFYLFTLITVVRA). Positions 16–36 (EEFILENEAEDIAPAVHGESG) are excised as a propeptide. 4 disulfide bridges follow: Cys-39–Cys-54, Cys-46–Cys-59, Cys-53–Cys-73, and Cys-61–Cys-71.

Belongs to the neurotoxin 02 (plectoxin) family. 09 subfamily. As to expression, expressed by the venom gland.

Its subcellular location is the secreted. The polypeptide is U10-ctenitoxin-Pn1a (Phoneutria nigriventer (Brazilian armed spider)).